The sequence spans 176 residues: Alkyl hydroperoxide reductase AhpD (176 aa).

C131 acts as the Proton donor in catalysis. A disulfide bridge links C131 with C134. The active-site Cysteine sulfenic acid (-SOH) intermediate is the C134.

The protein belongs to the AhpD family.

It carries out the reaction N(6)-[(R)-dihydrolipoyl]-L-lysyl-[lipoyl-carrier protein] + a hydroperoxide = N(6)-[(R)-lipoyl]-L-lysyl-[lipoyl-carrier protein] + an alcohol + H2O. Antioxidant protein with alkyl hydroperoxidase activity. Required for the reduction of the AhpC active site cysteine residues and for the regeneration of the AhpC enzyme activity. This Methylobacterium sp. (strain 4-46) protein is Alkyl hydroperoxide reductase AhpD.